Consider the following 120-residue polypeptide: Immunoglobulin lambda variable 4-60 (120 aa).

A signal peptide spans Met-1–Ser-21. The framework-1 stretch occupies residues Gln-22 to Ser-46. An Ig-like domain is found at Pro-23–Thr-120. Cysteines 43 and 113 form a disulfide. Residues Ser-47 to Ile-53 form a complementarity-determining-1 region. The tract at residues Ile-54–Lys-70 is framework-2. The interval Leu-71–Tyr-77 is complementarity-determining-2. A framework-3 region spans residues Asn-78–Cys-113. A complementarity-determining-3 region spans residues Glu-114–Thr-120.

As to quaternary structure, immunoglobulins are composed of two identical heavy chains and two identical light chains; disulfide-linked.

The protein resides in the secreted. It is found in the cell membrane. In terms of biological role, v region of the variable domain of immunoglobulin light chains that participates in the antigen recognition. Immunoglobulins, also known as antibodies, are membrane-bound or secreted glycoproteins produced by B lymphocytes. In the recognition phase of humoral immunity, the membrane-bound immunoglobulins serve as receptors which, upon binding of a specific antigen, trigger the clonal expansion and differentiation of B lymphocytes into immunoglobulins-secreting plasma cells. Secreted immunoglobulins mediate the effector phase of humoral immunity, which results in the elimination of bound antigens. The antigen binding site is formed by the variable domain of one heavy chain, together with that of its associated light chain. Thus, each immunoglobulin has two antigen binding sites with remarkable affinity for a particular antigen. The variable domains are assembled by a process called V-(D)-J rearrangement and can then be subjected to somatic hypermutations which, after exposure to antigen and selection, allow affinity maturation for a particular antigen. The chain is Immunoglobulin lambda variable 4-60 from Homo sapiens (Human).